Here is a 378-residue protein sequence, read N- to C-terminus: Mating-type protein MAT-1 (378 aa).

The segment at residues 60–117 is a DNA-binding region (alpha box); that stretch reads KARKALNAFVGFRCYYITIPMFKPWPMKKLSNLIGLLWEADPNKSLWSLMAKPWSTIR.

The protein belongs to the MATALPHA1 family.

It is found in the nucleus. Mating type proteins are sequence specific DNA-binding proteins that act as master switches in fungal differentiation by controlling gene expression in a cell type-specific fashion. Transcriptional activator that induces the transcription of alpha-specific genes. This chain is Mating-type protein MAT-1 (MAT1), found in Cochliobolus sativus (Common root rot and spot blotch fungus).